A 179-amino-acid polypeptide reads, in one-letter code: Adenylyl-sulfate kinase (179 aa).

13-20 (GLSGAGKS) is an ATP binding site. Catalysis depends on serine 87, which acts as the Phosphoserine intermediate.

This sequence belongs to the APS kinase family.

The enzyme catalyses adenosine 5'-phosphosulfate + ATP = 3'-phosphoadenylyl sulfate + ADP + H(+). Its pathway is sulfur metabolism; hydrogen sulfide biosynthesis; sulfite from sulfate: step 2/3. Its function is as follows. Catalyzes the synthesis of activated sulfate. This Paraburkholderia xenovorans (strain LB400) protein is Adenylyl-sulfate kinase.